A 195-amino-acid chain; its full sequence is Imidazoleglycerol-phosphate dehydratase (195 aa).

It belongs to the imidazoleglycerol-phosphate dehydratase family.

The protein localises to the cytoplasm. It catalyses the reaction D-erythro-1-(imidazol-4-yl)glycerol 3-phosphate = 3-(imidazol-4-yl)-2-oxopropyl phosphate + H2O. The protein operates within amino-acid biosynthesis; L-histidine biosynthesis; L-histidine from 5-phospho-alpha-D-ribose 1-diphosphate: step 6/9. The polypeptide is Imidazoleglycerol-phosphate dehydratase (Methylobacterium radiotolerans (strain ATCC 27329 / DSM 1819 / JCM 2831 / NBRC 15690 / NCIMB 10815 / 0-1)).